We begin with the raw amino-acid sequence, 380 residues long: Flap endonuclease 1 (380 aa).

The segment at 1-104 (MGIQGLAKLI…GELAKRSERR (104 aa)) is N-domain. The residue at position 19 (Arg19) is a Symmetric dimethylarginine; by PRMT5. Asp34 contributes to the Mg(2+) binding site. 2 residues coordinate DNA: Arg47 and Arg70. An N6-acetyllysine modification is found at Lys80. Position 86 (Asp86) interacts with Mg(2+). Symmetric dimethylarginine; by PRMT5 occurs at positions 100 and 104. Residues 122–253 (EVEKFTKRLV…KRAVDLIQKH (132 aa)) are I-domain. Glu158, Glu160, Asp179, and Asp181 together coordinate Mg(2+). Glu158 lines the DNA pocket. The residue at position 187 (Ser187) is a Phosphoserine; by CDK2. At Arg192 the chain carries Symmetric dimethylarginine; by PRMT5. The residue at position 197 (Ser197) is a Phosphoserine. DNA is bound by residues Gly231 and Asp233. Asp233 is a Mg(2+) binding site. Ser255, Ser293, and Ser335 each carry phosphoserine. A disordered region spans residues 327–380 (RLSKSRQGSTQGRLDDFFKVTGSLSSAKRKEPEPKGAAKKKAKTGAAGKFKRGK). Thr336 carries the phosphothreonine modification. The interaction with PCNA stretch occupies residues 336–344 (TQGRLDDFF). An N6-acetyllysine mark is found at Lys354, Lys375, Lys377, and Lys380. A compositionally biased stretch (basic residues) spans 363-380 (AAKKKAKTGAAGKFKRGK).

The protein belongs to the XPG/RAD2 endonuclease family. FEN1 subfamily. In terms of assembly, interacts with PCNA. Three molecules of FEN1 bind to one PCNA trimer with each molecule binding to one PCNA monomer. PCNA stimulates the nuclease activity without altering cleavage specificity. The C-terminal domain binds EP300; can bind simultaneously to both PCNA and EP300. Interacts with DDX11; this interaction is direct and increases flap endonuclease activity of FEN1. Interacts with WDR4; regulating its endonuclease activity. Interacts with POLB. Requires Mg(2+) as cofactor. Acetylated by EP300. Acetylation inhibits both endonuclease and exonuclease activity. Acetylation also reduces DNA-binding activity but does not affect interaction with PCNA or EP300. In terms of processing, phosphorylation upon DNA damage induces relocalization to the nuclear plasma. Phosphorylation at Ser-187 by CDK2 occurs during late S-phase and results in dissociation from PCNA. Post-translationally, methylation at Arg-192 by PRMT5 impedes Ser-187 phosphorylation and increases interaction with PCNA.

Its subcellular location is the nucleus. It is found in the nucleolus. The protein localises to the nucleoplasm. The protein resides in the mitochondrion. Structure-specific nuclease with 5'-flap endonuclease and 5'-3' exonuclease activities involved in DNA replication and repair. During DNA replication, cleaves the 5'-overhanging flap structure that is generated by displacement synthesis when DNA polymerase encounters the 5'-end of a downstream Okazaki fragment. It enters the flap from the 5'-end and then tracks to cleave the flap base, leaving a nick for ligation. Also involved in the long patch base excision repair (LP-BER) pathway, by cleaving within the apurinic/apyrimidinic (AP) site-terminated flap. Acts as a genome stabilization factor that prevents flaps from equilibrating into structures that lead to duplications and deletions. Also possesses 5'-3' exonuclease activity on nicked or gapped double-stranded DNA, and exhibits RNase H activity. Also involved in replication and repair of rDNA and in repairing mitochondrial DNA. The polypeptide is Flap endonuclease 1 (Bos taurus (Bovine)).